A 490-amino-acid polypeptide reads, in one-letter code: Bifunctional protein HldE (490 aa).

The segment at 1-330 (MERKEIESLF…AEIGHAHPDS (330 aa)) is ribokinase. 205-208 (NRKE) serves as a coordination point for ATP. Asp275 is an active-site residue. The segment at 356–490 (FTNGCFDLLH…EKIRTGSIKE (135 aa)) is cytidylyltransferase.

In the N-terminal section; belongs to the carbohydrate kinase PfkB family. The protein in the C-terminal section; belongs to the cytidylyltransferase family. In terms of assembly, homodimer.

It catalyses the reaction D-glycero-beta-D-manno-heptose 7-phosphate + ATP = D-glycero-beta-D-manno-heptose 1,7-bisphosphate + ADP + H(+). The catalysed reaction is D-glycero-beta-D-manno-heptose 1-phosphate + ATP + H(+) = ADP-D-glycero-beta-D-manno-heptose + diphosphate. It functions in the pathway nucleotide-sugar biosynthesis; ADP-L-glycero-beta-D-manno-heptose biosynthesis; ADP-L-glycero-beta-D-manno-heptose from D-glycero-beta-D-manno-heptose 7-phosphate: step 1/4. The protein operates within nucleotide-sugar biosynthesis; ADP-L-glycero-beta-D-manno-heptose biosynthesis; ADP-L-glycero-beta-D-manno-heptose from D-glycero-beta-D-manno-heptose 7-phosphate: step 3/4. In terms of biological role, catalyzes the phosphorylation of D-glycero-D-manno-heptose 7-phosphate at the C-1 position to selectively form D-glycero-beta-D-manno-heptose-1,7-bisphosphate. Catalyzes the ADP transfer from ATP to D-glycero-beta-D-manno-heptose 1-phosphate, yielding ADP-D-glycero-beta-D-manno-heptose. The chain is Bifunctional protein HldE from Geotalea uraniireducens (strain Rf4) (Geobacter uraniireducens).